Consider the following 210-residue polypeptide: MNLLAVRDLAVARGGLRAVEGVCFNLNAGGALVLRGPNGIGKTTLLRTLAGLQPLVSGVIEAAPDAIAYAGHSDGLKPALTVTENLRFWAEIFGGRNIDAALEAMNLRDLANRPAHALSAGQKRRLGLARLMVTGRPVWLLDEPTVSLDRDSVALFAAMLRAHLGRGGAAVIATHIDLGLPEAEILELGPFRASELRRQSRPAGFNEAFG.

The ABC transporter domain occupies 4-207 (LAVRDLAVAR…RQSRPAGFNE (204 aa)). 36–43 (GPNGIGKT) is an ATP binding site.

This sequence belongs to the ABC transporter superfamily. CcmA exporter (TC 3.A.1.107) family. The complex is composed of two ATP-binding proteins (CcmA) and two transmembrane proteins (CcmB).

It is found in the cell inner membrane. The catalysed reaction is heme b(in) + ATP + H2O = heme b(out) + ADP + phosphate + H(+). In terms of biological role, part of the ABC transporter complex CcmAB involved in the biogenesis of c-type cytochromes; once thought to export heme, this seems not to be the case, but its exact role is uncertain. Responsible for energy coupling to the transport system. This is Cytochrome c biogenesis ATP-binding export protein CcmA from Paracoccus denitrificans (strain Pd 1222).